A 444-amino-acid chain; its full sequence is MSLAKLRTHYTADVKPEKVDNGQKITLAGWVHEVRDLGGICFVVLRDREGKAQVTLVKKKIDKELFDAARRLVRESVISVTGSVKFEEKAPNGYELLPEEITVLNVANSPLPMDTTGKVEAELDTRLDSRFIDLRRAETTAVFKIRHQALQATREYFVQNGFIETATPKVVATATEGGTALFPITYFDREAFLNQSPQLFKQILMSGGFDRVFEIGPIFRAEEHDTRRHLNEATSIDVEVSFADHFDVMEILENLVAYVYAQVIEKCKPSLETLGIELKVPKTPFLKLTYNEVIEIINARSEEKMHWGDDLGTFGEHIVGNYVYETTGESHYFIIDWPTEIKPFYAMPYEDRPEYSKSFDMMHRTMELSSGAQRIHIPDLLKSRIESQGLNPEGFEFYLKAFEYGMPPHAGWGMGCERFIMTMLGTENIRDTVLFPRDRRRLSP.

Glu176 is an L-aspartate binding site. An aspartate region spans residues 198–201 (QLFK). Residue Arg220 coordinates L-aspartate. ATP is bound by residues 220–222 (RAE), 228–230 (RHL), and Glu367. Glu367 and Ser370 together coordinate Mg(2+). Ser370 and Arg374 together coordinate L-aspartate. Residue 415-418 (GCER) coordinates ATP.

The protein belongs to the class-II aminoacyl-tRNA synthetase family. Type 2 subfamily. Homodimer. Mg(2+) is required as a cofactor.

Its subcellular location is the cytoplasm. It catalyses the reaction tRNA(Asx) + L-aspartate + ATP = L-aspartyl-tRNA(Asx) + AMP + diphosphate. Functionally, aspartyl-tRNA synthetase with relaxed tRNA specificity since it is able to aspartylate not only its cognate tRNA(Asp) but also tRNA(Asn). Reaction proceeds in two steps: L-aspartate is first activated by ATP to form Asp-AMP and then transferred to the acceptor end of tRNA(Asp/Asn). The sequence is that of Aspartate--tRNA(Asp/Asn) ligase from Methanosarcina barkeri (strain Fusaro / DSM 804).